The following is a 204-amino-acid chain: LexA repressor (204 aa).

The segment at residues 30 to 50 (IREICQGVGLSSPSTVHHHLK) is a DNA-binding region (H-T-H motif). Active-site for autocatalytic cleavage activity residues include serine 125 and lysine 162.

The protein belongs to the peptidase S24 family. As to quaternary structure, homodimer.

It carries out the reaction Hydrolysis of Ala-|-Gly bond in repressor LexA.. Represses a number of genes involved in the response to DNA damage (SOS response), including recA and lexA. In the presence of single-stranded DNA, RecA interacts with LexA causing an autocatalytic cleavage which disrupts the DNA-binding part of LexA, leading to derepression of the SOS regulon and eventually DNA repair. This is LexA repressor from Carboxydothermus hydrogenoformans (strain ATCC BAA-161 / DSM 6008 / Z-2901).